Here is a 217-residue protein sequence, read N- to C-terminus: 3-demethoxyubiquinol 3-hydroxylase (217 aa).

Residues Glu-66, Glu-96, His-99, Glu-148, Glu-180, and His-183 each coordinate Fe cation.

This sequence belongs to the COQ7 family. It depends on Fe cation as a cofactor.

The protein localises to the cell membrane. The enzyme catalyses a 5-methoxy-2-methyl-3-(all-trans-polyprenyl)benzene-1,4-diol + AH2 + O2 = a 3-demethylubiquinol + A + H2O. It participates in cofactor biosynthesis; ubiquinone biosynthesis. Functionally, catalyzes the hydroxylation of 2-nonaprenyl-3-methyl-6-methoxy-1,4-benzoquinol during ubiquinone biosynthesis. The protein is 3-demethoxyubiquinol 3-hydroxylase of Xylella fastidiosa (strain 9a5c).